A 230-amino-acid chain; its full sequence is Flagellar L-ring protein (230 aa).

The first 15 residues, Met1–Ala15, serve as a signal peptide directing secretion. Cys16 is lipidated: N-palmitoyl cysteine. A lipid anchor (S-diacylglycerol cysteine) is attached at Cys16.

The protein belongs to the FlgH family. In terms of assembly, the basal body constitutes a major portion of the flagellar organelle and consists of four rings (L,P,S, and M) mounted on a central rod.

It localises to the cell outer membrane. It is found in the bacterial flagellum basal body. Its function is as follows. Assembles around the rod to form the L-ring and probably protects the motor/basal body from shearing forces during rotation. The protein is Flagellar L-ring protein of Xanthomonas axonopodis pv. citri (strain 306).